The primary structure comprises 308 residues: Aspartate carbamoyltransferase catalytic subunit (308 aa).

Arg-58 and Thr-59 together coordinate carbamoyl phosphate. Lys-86 is a binding site for L-aspartate. The carbamoyl phosphate site is built by Arg-108, His-136, and Gln-139. L-aspartate is bound by residues Arg-169 and Arg-222. The carbamoyl phosphate site is built by Gly-264 and Pro-265.

It belongs to the aspartate/ornithine carbamoyltransferase superfamily. ATCase family. Heterododecamer (2C3:3R2) of six catalytic PyrB chains organized as two trimers (C3), and six regulatory PyrI chains organized as three dimers (R2).

It catalyses the reaction carbamoyl phosphate + L-aspartate = N-carbamoyl-L-aspartate + phosphate + H(+). It functions in the pathway pyrimidine metabolism; UMP biosynthesis via de novo pathway; (S)-dihydroorotate from bicarbonate: step 2/3. Its function is as follows. Catalyzes the condensation of carbamoyl phosphate and aspartate to form carbamoyl aspartate and inorganic phosphate, the committed step in the de novo pyrimidine nucleotide biosynthesis pathway. The protein is Aspartate carbamoyltransferase catalytic subunit of Campylobacter hominis (strain ATCC BAA-381 / DSM 21671 / CCUG 45161 / LMG 19568 / NCTC 13146 / CH001A).